The chain runs to 237 residues: Ras-related protein Rab-23 (237 aa).

Ala-19 is a binding site for GDP. Residues Val-20, Gly-21, Lys-22, Ser-23, and Ser-24 each coordinate GTP. GDP-binding residues include Gly-21, Lys-22, Ser-23, Ser-24, and Asp-37. Residue Ser-23 participates in Mg(2+) binding. The Switch 1 motif lies at 28-46 (RYCKGIFTKDYKKTIGVDF). Position 38 (Tyr-38) interacts with GTP. Position 40 (Lys-40) interacts with GDP. Residue Thr-41 participates in GTP binding. Residues Thr-41 and Asp-64 each contribute to the Mg(2+) site. Residues 65 to 84 (TAGQEEFDAITKAYYRGAQA) carry the Switch 2 motif. 7 residues coordinate GTP: Gly-67, Asn-121, Lys-122, Asp-124, Ser-151, Val-152, and Lys-153. Positions 121, 122, and 124 each coordinate GDP. The GDP site is built by Val-152 and Lys-153. 2 positions are modified to phosphoserine: Ser-186 and Ser-187. Residues 204 to 237 (QNSSSLNGGDVINLRPNKQRTKRTRNPFSSCSVP) are disordered. Cys-234 carries the post-translational modification Cysteine methyl ester. A lipid anchor (S-geranylgeranyl cysteine) is attached at Cys-234. A propeptide spans 235–237 (SVP) (removed in mature form).

Belongs to the small GTPase superfamily. Rab family. In terms of assembly, interacts with SUFU. It depends on Mg(2+) as a cofactor. As to expression, detected in brain neurons (at protein level). Forebrain and midbrain.

Its subcellular location is the cell membrane. It localises to the cytoplasm. It is found in the endosome membrane. The protein resides in the cytoplasmic vesicle. The protein localises to the autophagosome. Its subcellular location is the phagosome. It localises to the phagosome membrane. It catalyses the reaction GTP + H2O = GDP + phosphate + H(+). With respect to regulation, regulated by guanine nucleotide exchange factors (GEFs) which promote the exchange of bound GDP for free GTP. Regulated by GTPase activating proteins (GAPs) which increase the GTP hydrolysis activity. Inhibited by GDP dissociation inhibitors (GDIs). In terms of biological role, the small GTPases Rab are key regulators of intracellular membrane trafficking, from the formation of transport vesicles to their fusion with membranes. Rabs cycle between an inactive GDP-bound form and an active GTP-bound form that is able to recruit to membranes different set of downstream effectors directly responsible for vesicle formation, movement, tethering and fusion. Plays a role in autophagic vacuole assembly, and mediates defense against pathogens, such as S.aureus, by promoting their capture by autophagosomes that then merge with lysosomes. Together with SUFU, prevents nuclear import of GLI1, and thereby inhibits GLI1 transcription factor activity. Regulates GLI1 in differentiating chondrocytes. Likewise, regulates GLI3 proteolytic processing and modulates GLI2 and GLI3 transcription factor activity. The sequence is that of Ras-related protein Rab-23 from Mus musculus (Mouse).